The primary structure comprises 130 residues: Small ribosomal subunit protein uS11c (130 aa).

Belongs to the universal ribosomal protein uS11 family. Part of the 30S ribosomal subunit.

Its subcellular location is the plastid. It is found in the chloroplast. The sequence is that of Small ribosomal subunit protein uS11c from Trieres chinensis (Marine centric diatom).